The sequence spans 805 residues: Ubiquitin carboxyl-terminal hydrolase 5 (805 aa).

A Rhodanese domain is found at 159–283 (HGDALLLIDV…WVKLGGAYQS (125 aa)). The segment at 359-380 (RNSPTVQKFSPHPPTTLSKLNT) is disordered. Residues 446–804 (VGLENIGNCC…SAYVLFYERI (359 aa)) enclose the USP domain. Residue Cys-455 is the Nucleophile of the active site. The active-site Proton acceptor is the His-761.

This sequence belongs to the peptidase C19 family.

The catalysed reaction is Thiol-dependent hydrolysis of ester, thioester, amide, peptide and isopeptide bonds formed by the C-terminal Gly of ubiquitin (a 76-residue protein attached to proteins as an intracellular targeting signal).. The chain is Ubiquitin carboxyl-terminal hydrolase 5 (UBP5) from Saccharomyces cerevisiae (strain ATCC 204508 / S288c) (Baker's yeast).